The chain runs to 245 residues: Complement C1q subcomponent subunit A (245 aa).

The signal sequence occupies residues 1 to 22 (METSQGWLVACVLTMTLVWTVA). Residues 28-114 (APNGKDGAPG…NPGNIRDQPR (87 aa)) form a disordered region. One can recognise a Collagen-like domain in the interval 31–109 (GKDGAPGNPG…KGVKGNPGNI (79 aa)). A 4-hydroxyproline mark is found at proline 39 and proline 45. 5-hydroxylysine is present on lysine 48. Lysine 48 carries O-linked (Gal...) hydroxylysine; alternate glycosylation. Proline 54 is subject to 4-hydroxyproline. At lysine 67 the chain carries 5-hydroxylysine. Lysine 67 carries O-linked (Gal...) hydroxylysine; alternate glycosylation. Proline 79 and proline 85 each carry 4-hydroxyproline. A compositionally biased stretch (low complexity) spans 79 to 99 (PGNVGLPGPSGPLGDSGPQGL). A 5-hydroxylysine modification is found at lysine 100. O-linked (Gal...) hydroxylysine; alternate glycosylation is present at lysine 100. The 136-residue stretch at 110–245 (RDQPRPAFSA…FSGFLIFPSA (136 aa)) folds into the C1q domain. An N-linked (GlcNAc...) asparagine glycan is attached at asparagine 146. Glutamine 199 contributes to the Ca(2+) binding site.

Core component of the complement C1 complex, a calcium-dependent complex composed of 1 molecule of the C1Q subcomplex, 2 molecules of C1R and 2 molecules of C1S. The C1Q subcomplex is composed 18 subunits: 3 chains of C1QA, C1QB, and C1QC trimerize to form 6 collagen-like triple helices connected to six globular ligand-recognition modules (C1q domain). Interacts with CR1 (via Sushi 24 and Sushi 25 domains). Interacts (via C-terminus) with CD33; this interaction activates CD33 inhibitory motifs. In terms of processing, O-linked glycans are assumed to be the Glc-Gal disaccharides typically found as secondary modifications of hydroxylated lysines in collagen-like domains.

It is found in the secreted. The protein localises to the cell surface. The C1Q subcomplex is inhibited by sulfated molecules, such as triterpenoid sulfates, heparan sulfate, or chondroitin sulfates. Core component of the complement C1 complex, a multiprotein complex that initiates the classical pathway of the complement system, a cascade of proteins that leads to phagocytosis and breakdown of pathogens and signaling that strengthens the adaptive immune system. The classical complement pathway is initiated by the C1Q subcomplex of the C1 complex, which specifically binds IgG or IgM immunoglobulins complexed with antigens, forming antigen-antibody complexes on the surface of pathogens: C1QA, together with C1QB and C1QC, specifically recognizes and binds the Fc regions of IgG or IgM via its C1q domain. Immunoglobulin-binding activates the proenzyme C1R, which cleaves C1S, initiating the proteolytic cascade of the complement system. The C1Q subcomplex is activated by a hexamer of IgG complexed with antigens, while it is activated by a pentameric IgM. The C1Q subcomplex also recognizes and binds phosphatidylserine exposed on the surface of cells undergoing programmed cell death, possibly promoting activation of the complement system. The polypeptide is Complement C1q subcomponent subunit A (Mus musculus (Mouse)).